Reading from the N-terminus, the 316-residue chain is MEKALHRISSMNAPLPDISLTDAAPGGRPLEWVGMQGIDLPVAVAEPGCRRDVHARADVQVDLPAPHVKGIHMSRLYRLLDGLGDGTALSPAGLQHVLHAMVDSHRDCDTRSARLRLRFDLLARRAALVTDGLAGWKAYPVRIDATLSGARFELRAQVTVVYSSTCPCSAALSRHWVEQAFLAAFGHDDRVEPAAVAAWLKRHATAATPHSQRSEAVVSVALPADGATLGLIDLIDRIEHALGTPVQTAVKRADEQAFAVLNGGNLMFVEDAARRVQAALDGHHANPRVHVRHLESLHPHDAVAWAAPVREGADAC.

This sequence belongs to the GTP cyclohydrolase IV family.

The enzyme catalyses GTP + H2O = 7,8-dihydroneopterin 3'-triphosphate + formate + H(+). It functions in the pathway cofactor biosynthesis; 7,8-dihydroneopterin triphosphate biosynthesis; 7,8-dihydroneopterin triphosphate from GTP: step 1/1. Its function is as follows. Converts GTP to 7,8-dihydroneopterin triphosphate. In Burkholderia lata (strain ATCC 17760 / DSM 23089 / LMG 22485 / NCIMB 9086 / R18194 / 383), this protein is GTP cyclohydrolase FolE2 1.